A 376-amino-acid chain; its full sequence is Phytanoyl-CoA hydroxylase-interacting protein-like (376 aa).

One can recognise a Fibronectin type-III domain in the interval 52–161 (VPHNIKISNI…EIIEFCTADY (110 aa)).

This sequence belongs to the PHYHIP family.

May play a role in the development of the central system. This is Phytanoyl-CoA hydroxylase-interacting protein-like (phyhipl) from Xenopus tropicalis (Western clawed frog).